A 548-amino-acid polypeptide reads, in one-letter code: Tylosin resistance ATP-binding protein TlrC (548 aa).

ABC transporter domains lie at 9–265 and 347–547; these read LSLH…RRRQ and IATA…VSGA. ATP contacts are provided by residues 41–48 and 387–394; these read GDNGAGKS and GPNGAGKS.

It belongs to the ABC transporter superfamily.

The protein resides in the cell membrane. Responsible for tylosin resistance, and is proposed to be a subunit of a multicomponent export system for the energy-dependent efflux of tylosin. This Streptomyces fradiae (Streptomyces roseoflavus) protein is Tylosin resistance ATP-binding protein TlrC (tlrC).